A 173-amino-acid chain; its full sequence is Ribosome maturation factor RimM (173 aa).

The 73-residue stretch at 98–170 (VGDMTWDSFI…SLTVSLPEGL (73 aa)) folds into the PRC barrel domain.

The protein belongs to the RimM family. In terms of assembly, binds ribosomal protein uS19.

The protein localises to the cytoplasm. In terms of biological role, an accessory protein needed during the final step in the assembly of 30S ribosomal subunit, possibly for assembly of the head region. Essential for efficient processing of 16S rRNA. May be needed both before and after RbfA during the maturation of 16S rRNA. It has affinity for free ribosomal 30S subunits but not for 70S ribosomes. This is Ribosome maturation factor RimM from Parabacteroides distasonis (strain ATCC 8503 / DSM 20701 / CIP 104284 / JCM 5825 / NCTC 11152).